A 501-amino-acid polypeptide reads, in one-letter code: Glycogen synthase 1 (501 aa).

Residue Lys-18 coordinates ADP-alpha-D-glucose.

Belongs to the glycosyltransferase 1 family. Bacterial/plant glycogen synthase subfamily.

The enzyme catalyses [(1-&gt;4)-alpha-D-glucosyl](n) + ADP-alpha-D-glucose = [(1-&gt;4)-alpha-D-glucosyl](n+1) + ADP + H(+). It participates in glycan biosynthesis; glycogen biosynthesis. Synthesizes alpha-1,4-glucan chains using ADP-glucose. This Geobacter sulfurreducens (strain ATCC 51573 / DSM 12127 / PCA) protein is Glycogen synthase 1.